The following is a 218-amino-acid chain: Serine/threonine-protein phosphatase 1 (218 aa).

Positions 24, 26, 53, and 79 each coordinate Mn(2+). His80 (proton donor) is an active-site residue. Residue His187 participates in Mn(2+) binding.

It belongs to the PPP phosphatase family. PP-1 subfamily. Mn(2+) serves as cofactor.

The catalysed reaction is O-phospho-L-seryl-[protein] + H2O = L-seryl-[protein] + phosphate. It carries out the reaction O-phospho-L-threonyl-[protein] + H2O = L-threonyl-[protein] + phosphate. Functionally, plays a key role in signaling protein misfolding via the CpxR/CPXA transducing system. It also modulates the phosphorylated status of many phosphoproteins in E.coli, some of which acting as major chaperones. Has been shown, in vitro, to act on Ser, Thr and Tyr-phosphorylated substrates. The chain is Serine/threonine-protein phosphatase 1 (pphA) from Escherichia coli (strain K12).